The sequence spans 69 residues: DNA-directed RNA polymerase subunit omega (69 aa).

Belongs to the RNA polymerase subunit omega family. The RNAP catalytic core consists of 2 alpha, 1 beta, 1 beta' and 1 omega subunit. When a sigma factor is associated with the core the holoenzyme is formed, which can initiate transcription.

It catalyses the reaction RNA(n) + a ribonucleoside 5'-triphosphate = RNA(n+1) + diphosphate. Promotes RNA polymerase assembly. Latches the N- and C-terminal regions of the beta' subunit thereby facilitating its interaction with the beta and alpha subunits. This chain is DNA-directed RNA polymerase subunit omega, found in Geobacter metallireducens (strain ATCC 53774 / DSM 7210 / GS-15).